The primary structure comprises 769 residues: Transferrin receptor protein 1 (769 aa).

Residues 1-70 are Cytoplasmic-facing; it reads MMDQARSAFS…KPKRFNGFIC (70 aa). Residues 1–70 are mediates interaction with SH3BP4; sequence MMDQARSAFS…KPKRFNGFIC (70 aa). Residues Ser-10 and Ser-19 each carry the phosphoserine modification. Phosphotyrosine is present on Tyr-20. The short motif at 20-23 is the Endocytosis signal element; that stretch reads YTRF. Position 21 is a phosphothreonine (Thr-21). Ser-24 is subject to Phosphoserine. Positions 61–64 match the Stop-transfer sequence motif; it reads KPKR. Cys-70 carries S-palmitoyl cysteine lipidation. The helical; Signal-anchor for type II membrane protein transmembrane segment at 71-91 threads the bilayer; the sequence is YGTIAIILFFLIGFMIGYLGY. At 92-769 the chain is on the extracellular side; sequence CKRVEAKSEC…GDIWDIDNEF (678 aa). O-linked (GalNAc...) threonine glycosylation occurs at Thr-107. The PA domain occupies 232–322; sequence SKAATVTGRL…GTGDPYTPGF (91 aa). Residues Asn-260 and Asn-326 are each glycosylated (N-linked (GlcNAc...) asparagine). Positions 578–769 are ligand-binding; that stretch reads TMDVYEKLIQ…GDIWDIDNEF (192 aa). The Cell attachment site signature appears at 655-657; it reads RGD. N-linked (GlcNAc...) asparagine glycans are attached at residues Asn-731 and Asn-736.

It belongs to the peptidase M28 family. M28B subfamily. Homodimer; disulfide-linked. Binds one transferrin molecule per subunit. Interacts with SH3BP4. Homodimer; disulfide-linked. Binds one transferrin or HFE molecule per subunit. Binds the HLA class II histocompatibility antigen, DR1. Interacts with SH3BP3. Interacts with STEAP3; facilitates TFRC endocytosis in erythroid precursor cells. Post-translationally, stearoylated by ZDHHC6 which inhibits TFRC-mediated activation of the JNK pathway and promotes mitochondrial fragmentation. Stearoylation does not affect iron uptake. N- and O-glycosylated, phosphorylated and palmitoylated.

It is found in the cell membrane. Its subcellular location is the melanosome. Its function is as follows. Cellular uptake of iron occurs via receptor-mediated endocytosis of ligand-occupied transferrin receptor into specialized endosomes. Endosomal acidification leads to iron release. The apotransferrin-receptor complex is then recycled to the cell surface with a return to neutral pH and the concomitant loss of affinity of apotransferrin for its receptor. Transferrin receptor is necessary for development of erythrocytes and the nervous system. Positively regulates T and B cell proliferation through iron uptake. Acts as a lipid sensor that regulates mitochondrial fusion by regulating activation of the JNK pathway. When dietary levels of stearate (C18:0) are low, promotes activation of the JNK pathway, resulting in HUWE1-mediated ubiquitination and subsequent degradation of the mitofusin MFN2 and inhibition of mitochondrial fusion. When dietary levels of stearate (C18:0) are high, TFRC stearoylation inhibits activation of the JNK pathway and thus degradation of the mitofusin MFN2. Mediates uptake of NICOL1 into fibroblasts where it may regulate extracellular matrix production. The protein is Transferrin receptor protein 1 (TFRC) of Felis catus (Cat).